A 173-amino-acid chain; its full sequence is Co-chaperone protein HscB homolog (173 aa).

One can recognise a J domain in the interval 3–75 (NPFSLFNLPV…IARATAIIEI (73 aa)).

This sequence belongs to the HscB family. As to quaternary structure, interacts with HscA and stimulates its ATPase activity.

Functionally, co-chaperone involved in the maturation of iron-sulfur cluster-containing proteins. Seems to help targeting proteins to be folded toward HscA. In Haemophilus ducreyi (strain 35000HP / ATCC 700724), this protein is Co-chaperone protein HscB homolog.